A 154-amino-acid polypeptide reads, in one-letter code: Ribonuclease H (154 aa).

In terms of domain architecture, RNase H type-1 spans Glu-5–Asp-146. Mg(2+) is bound by residues Asp-14, Glu-52, Asp-74, and Asp-138.

It belongs to the RNase H family. Monomer. It depends on Mg(2+) as a cofactor.

The protein localises to the cytoplasm. The enzyme catalyses Endonucleolytic cleavage to 5'-phosphomonoester.. Endonuclease that specifically degrades the RNA of RNA-DNA hybrids. In Coxiella burnetii (strain RSA 331 / Henzerling II), this protein is Ribonuclease H.